The following is a 123-amino-acid chain: UPF0102 protein Cbei_1183 (123 aa).

It belongs to the UPF0102 family.

This chain is UPF0102 protein Cbei_1183, found in Clostridium beijerinckii (strain ATCC 51743 / NCIMB 8052) (Clostridium acetobutylicum).